Reading from the N-terminus, the 504-residue chain is Sodium-coupled neutral amino acid symporter 2 (504 aa).

Residues 1 to 22 form a disordered region; it reads MKKTEMGRFNISPDEDSSSYSS. Topologically, residues 1-76 are cytoplasmic; that stretch reads MKKTEMGRFN…HPGTTSFGMS (76 aa). The tract at residues 1-96 is regulates protein turnover upon amino acid deprivation; sequence MKKTEMGRFN…SGILGLSYAM (96 aa). Ser-12, Ser-21, Ser-22, and Ser-55 each carry phosphoserine. A helical transmembrane segment spans residues 77–96; sequence VFNLSNAIVGSGILGLSYAM. A Na(+)-binding site is contributed by Asn-82. Topologically, residues 97–102 are extracellular; it reads ANTGIA. The chain crosses the membrane as a helical span at residues 103 to 123; that stretch reads LFIILLTFVSIFSLYSVHLLL. Over 124–158 the chain is Cytoplasmic; sequence KTANEGGSLLYEQLGHKAYGLAGKLAASGSITMQN. Residues 159–177 traverse the membrane as a helical segment; that stretch reads IGAMSSYLFIVKYELPLVI. Over 178–188 the chain is Extracellular; that stretch reads KALMNIEDTNG. The chain crosses the membrane as a helical span at residues 189 to 209; sequence LWYLNGDYLVLLVSFVLILPL. At 210–217 the chain is on the cytoplasmic side; it reads SLLRNLGY. A helical membrane pass occupies residues 218–238; it reads LGYTSGLSLLCMIFFLIVVIC. The Extracellular portion of the chain corresponds to 239–290; sequence KKFQIPCPVEVALMANETVNGTFTQVALAALASNSTAADTCRPRYFIFNSQT. The cysteines at positions 245 and 279 are disulfide-linked. N-linked (GlcNAc...) asparagine glycans are attached at residues Asn-254, Asn-258, and Asn-272. The chain crosses the membrane as a helical span at residues 291 to 311; sequence VYAVPILTFSFVCHPAVLPIY. The Cytoplasmic segment spans residues 312–327; sequence EELKSRSRRRMMNVSK. A helical transmembrane segment spans residues 328 to 348; the sequence is ISFFAMFLMYLLAALFGYLTF. Residues 349–369 are Extracellular-facing; that stretch reads YEHVESELLHTYSAIVGTDIL. Residues 370–390 form a helical membrane-spanning segment; the sequence is LLVVRLAVLVAVTLTVPVVIF. Thr-384 contacts Na(+). At 391–411 the chain is on the cytoplasmic side; sequence PIRSSVTHLLCPTKEFSWFRH. Residues 412–432 form a helical membrane-spanning segment; sequence SVITVTILAFTNLLVIFVPTI. Topologically, residues 433 to 434 are extracellular; the sequence is RD. Residues 435-455 traverse the membrane as a helical segment; it reads IFGFIGASAAAMLIFILPSAF. Residues 456 to 470 lie on the Cytoplasmic side of the membrane; it reads YIKLVKKEPMRSVQK. Residues 471-493 form a helical membrane-spanning segment; it reads IGALCFLLSGVVVMIGSMGLIVL. Residues 494-504 lie on the Extracellular side of the membrane; sequence DWVHDASAGGH.

The protein belongs to the amino acid/polyamine transporter 2 family. In terms of processing, polyubiquitination by NEDD4L regulates the degradation and the activity of SLC38A2. Widely expressed. Expressed in skeletal muscle and adipose tissue (at protein level). Expressed by glutamatergic and GABAergic neurons together with astrocytes and other non-neuronal cells in the cerebral cortex (at protein level). Widely expressed in the central nervous systeme where, it is enriched in the spinal cord and the brainstem nuclei, especially those of the auditory system.

Its subcellular location is the cell membrane. It carries out the reaction L-alanine(in) + Na(+)(in) = L-alanine(out) + Na(+)(out). The catalysed reaction is glycine(in) + Na(+)(in) = glycine(out) + Na(+)(out). The enzyme catalyses L-serine(in) + Na(+)(in) = L-serine(out) + Na(+)(out). It catalyses the reaction L-proline(in) + Na(+)(in) = L-proline(out) + Na(+)(out). It carries out the reaction L-methionine(in) + Na(+)(in) = L-methionine(out) + Na(+)(out). The catalysed reaction is L-histidine(in) + Na(+)(in) = L-histidine(out) + Na(+)(out). The enzyme catalyses L-asparagine(in) + Na(+)(in) = L-asparagine(out) + Na(+)(out). It catalyses the reaction L-glutamine(in) + Na(+)(in) = L-glutamine(out) + Na(+)(out). It carries out the reaction L-threonine(in) + Na(+)(in) = L-threonine(out) + Na(+)(out). The catalysed reaction is L-leucine(in) + Na(+)(in) = L-leucine(out) + Na(+)(out). The enzyme catalyses L-phenylalanine(in) + Na(+)(in) = L-phenylalanine(out) + Na(+)(out). Its activity is regulated as follows. Inhibited by N-methyl-D-glucamine. Inhibited by choline. Allosteric regulation of sodium ions binding by pH. Symporter that cotransports neutral amino acids and sodium ions from the extracellular to the intracellular side of the cell membrane. The transport is pH-sensitive, Li(+)-intolerant, electrogenic, driven by the Na(+) electrochemical gradient and cotransports of neutral amino acids and sodium ions with a stoichiometry of 1:1. May function in the transport of amino acids at the blood-brain barrier. May function in the transport of amino acids in the supply of maternal nutrients to the fetus through the placenta. Maintains a key metabolic glutamine/glutamate balance underpinning retrograde signaling by dendritic release of the neurotransmitter glutamate. Transports L-proline in differentiating osteoblasts for the efficient synthesis of proline-enriched proteins and provides proline essential for osteoblast differentiation and bone formation during bone development. The chain is Sodium-coupled neutral amino acid symporter 2 from Rattus norvegicus (Rat).